We begin with the raw amino-acid sequence, 479 residues long: ATP-dependent protease ATPase subunit HslU (479 aa).

Residues I32, 74-79, D290, E355, and R427 each bind ATP; that span reads GVGKTE.

Belongs to the ClpX chaperone family. HslU subfamily. In terms of assembly, a double ring-shaped homohexamer of HslV is capped on each side by a ring-shaped HslU homohexamer. The assembly of the HslU/HslV complex is dependent on binding of ATP.

It is found in the cytoplasm. In terms of biological role, ATPase subunit of a proteasome-like degradation complex; this subunit has chaperone activity. The binding of ATP and its subsequent hydrolysis by HslU are essential for unfolding of protein substrates subsequently hydrolyzed by HslV. HslU recognizes the N-terminal part of its protein substrates and unfolds these before they are guided to HslV for hydrolysis. The polypeptide is ATP-dependent protease ATPase subunit HslU (Leptospira interrogans serogroup Icterohaemorrhagiae serovar Lai (strain 56601)).